Here is a 466-residue protein sequence, read N- to C-terminus: Adenosylhomocysteinase (466 aa).

The substrate site is built by Thr-57, Asp-132, and Glu-192. NAD(+) is bound at residue 193–195; it reads TTT. Residues Lys-222 and Asp-226 each contribute to the substrate site. Residues Asn-227, 256–261, Glu-279, Asn-314, 335–337, and Asn-380 each bind NAD(+); these read GYGDVG and IGH.

It belongs to the adenosylhomocysteinase family. Requires NAD(+) as cofactor.

Its subcellular location is the cytoplasm. It carries out the reaction S-adenosyl-L-homocysteine + H2O = L-homocysteine + adenosine. It functions in the pathway amino-acid biosynthesis; L-homocysteine biosynthesis; L-homocysteine from S-adenosyl-L-homocysteine: step 1/1. In terms of biological role, may play a key role in the regulation of the intracellular concentration of adenosylhomocysteine. This is Adenosylhomocysteinase from Brucella melitensis biotype 2 (strain ATCC 23457).